A 166-amino-acid chain; its full sequence is Endoribonuclease YbeY (166 aa).

Zn(2+)-binding residues include His-129, His-133, and His-139.

Belongs to the endoribonuclease YbeY family. It depends on Zn(2+) as a cofactor.

It is found in the cytoplasm. Its function is as follows. Single strand-specific metallo-endoribonuclease involved in late-stage 70S ribosome quality control and in maturation of the 3' terminus of the 16S rRNA. This is Endoribonuclease YbeY from Mesorhizobium japonicum (strain LMG 29417 / CECT 9101 / MAFF 303099) (Mesorhizobium loti (strain MAFF 303099)).